Here is a 209-residue protein sequence, read N- to C-terminus: Eukaryotic translation initiation factor isoform 4E-2 (209 aa).

A disordered region spans residues 1–29 (MAEVEAALPVAATETPEVAAEGDAGAAEA). Over residues 9 to 29 (PVAATETPEVAAEGDAGAAEA) the composition is skewed to low complexity. MRNA is bound by residues 51-56 (PGAAWG), Lys83, and 101-102 (WE). Cys106 and Cys145 are disulfide-bonded. MRNA contacts are provided by residues 152–157 (RQRQDK) and 197–200 (RSQK).

The protein belongs to the eukaryotic initiation factor 4E family. EIF4F is a multi-subunit complex, the composition of which varies with external and internal environmental conditions. It is composed of at least EIF4A, EIF4E and EIF4G. EIF4E is also known to interact with other partners. In higher plants two isoforms of EIF4F have been identified, named isoform EIF4F and isoform EIF(iso)4F. Isoform EIF4F has subunits p220 and p26, whereas isoform EIF(iso)4F has subunits p82 and p28. According to the redox status, the Cys-106-Cys-145 disulfide bridge may have a role in regulating protein function by affecting its ability to bind capped mRNA.

It is found in the cytoplasm. The protein resides in the nucleus. In terms of biological role, component of the protein complex eIF4F, which is involved in the recognition of the mRNA cap, ATP-dependent unwinding of 5'-terminal secondary structure and recruitment of mRNA to the ribosome. Recognizes and binds the 7-methylguanosine-containing mRNA cap during an early step in the initiation of protein synthesis and facilitates ribosome binding by inducing the unwinding of the mRNAs secondary structures. The protein is Eukaryotic translation initiation factor isoform 4E-2 of Triticum aestivum (Wheat).